The following is a 96-amino-acid chain: Acylphosphatase (96 aa).

The Acylphosphatase-like domain occupies 9–96 (CAEIYVSGRV…DTFTDFFIKR (88 aa)). Catalysis depends on residues Arg24 and Asn42.

This sequence belongs to the acylphosphatase family.

The enzyme catalyses an acyl phosphate + H2O = a carboxylate + phosphate + H(+). This chain is Acylphosphatase (acyP), found in Methanococcoides burtonii (strain DSM 6242 / NBRC 107633 / OCM 468 / ACE-M).